The sequence spans 125 residues: Small ribosomal subunit protein bS6 (125 aa).

Belongs to the bacterial ribosomal protein bS6 family.

Binds together with bS18 to 16S ribosomal RNA. This is Small ribosomal subunit protein bS6 from Campylobacter jejuni (strain RM1221).